The sequence spans 507 residues: ATP synthase subunit alpha, chloroplastic (507 aa).

An ATP-binding site is contributed by Gly170 to Thr177.

The protein belongs to the ATPase alpha/beta chains family. F-type ATPases have 2 components, CF(1) - the catalytic core - and CF(0) - the membrane proton channel. CF(1) has five subunits: alpha(3), beta(3), gamma(1), delta(1), epsilon(1). CF(0) has four main subunits: a, b, b' and c.

Its subcellular location is the plastid. It is found in the chloroplast thylakoid membrane. The catalysed reaction is ATP + H2O + 4 H(+)(in) = ADP + phosphate + 5 H(+)(out). Its function is as follows. Produces ATP from ADP in the presence of a proton gradient across the membrane. The alpha chain is a regulatory subunit. The protein is ATP synthase subunit alpha, chloroplastic of Nicotiana sylvestris (Wood tobacco).